The chain runs to 349 residues: Anthranilate phosphoribosyltransferase (349 aa).

5-phospho-alpha-D-ribose 1-diphosphate-binding positions include Gly94, 97–98 (GD), Thr102, 104–107 (NIST), 122–130 (KHGNRSVSS), and Ser134. Gly94 contributes to the anthranilate binding site. Ser106 contributes to the Mg(2+) binding site. Asn125 provides a ligand contact to anthranilate. Arg180 contacts anthranilate. Mg(2+) contacts are provided by Asp239 and Glu240.

It belongs to the anthranilate phosphoribosyltransferase family. In terms of assembly, homodimer. Mg(2+) is required as a cofactor.

It carries out the reaction N-(5-phospho-beta-D-ribosyl)anthranilate + diphosphate = 5-phospho-alpha-D-ribose 1-diphosphate + anthranilate. Its pathway is amino-acid biosynthesis; L-tryptophan biosynthesis; L-tryptophan from chorismate: step 2/5. Functionally, catalyzes the transfer of the phosphoribosyl group of 5-phosphorylribose-1-pyrophosphate (PRPP) to anthranilate to yield N-(5'-phosphoribosyl)-anthranilate (PRA). The sequence is that of Anthranilate phosphoribosyltransferase from Trichlorobacter lovleyi (strain ATCC BAA-1151 / DSM 17278 / SZ) (Geobacter lovleyi).